Here is a 352-residue protein sequence, read N- to C-terminus: Peptide chain release factor 1 (352 aa).

Position 233 is an N5-methylglutamine (glutamine 233). Residues asparagine 288–asparagine 309 form a disordered region. A compositionally biased stretch (basic and acidic residues) spans alanine 289–arginine 306.

Belongs to the prokaryotic/mitochondrial release factor family. Post-translationally, methylated by PrmC. Methylation increases the termination efficiency of RF1.

It localises to the cytoplasm. In terms of biological role, peptide chain release factor 1 directs the termination of translation in response to the peptide chain termination codons UAG and UAA. This is Peptide chain release factor 1 (prfA) from Helicobacter pylori (strain ATCC 700392 / 26695) (Campylobacter pylori).